Here is a 356-residue protein sequence, read N- to C-terminus: Phosphoribosylformylglycinamidine cyclo-ligase (356 aa).

Belongs to the AIR synthase family.

Its subcellular location is the cytoplasm. It carries out the reaction 2-formamido-N(1)-(5-O-phospho-beta-D-ribosyl)acetamidine + ATP = 5-amino-1-(5-phospho-beta-D-ribosyl)imidazole + ADP + phosphate + H(+). It participates in purine metabolism; IMP biosynthesis via de novo pathway; 5-amino-1-(5-phospho-D-ribosyl)imidazole from N(2)-formyl-N(1)-(5-phospho-D-ribosyl)glycinamide: step 2/2. This is Phosphoribosylformylglycinamidine cyclo-ligase from Acinetobacter baumannii (strain AB307-0294).